Reading from the N-terminus, the 358-residue chain is Peptide chain release factor 1 (358 aa).

Glutamine 233 is subject to N5-methylglutamine. The span at 282–306 (QRAASERSADRRGQVGSGDRSERVR) shows a compositional bias: basic and acidic residues. Residues 282 to 308 (QRAASERSADRRGQVGSGDRSERVRTY) are disordered.

It belongs to the prokaryotic/mitochondrial release factor family. Methylated by PrmC. Methylation increases the termination efficiency of RF1.

It localises to the cytoplasm. In terms of biological role, peptide chain release factor 1 directs the termination of translation in response to the peptide chain termination codons UAG and UAA. This is Peptide chain release factor 1 from Afipia carboxidovorans (strain ATCC 49405 / DSM 1227 / KCTC 32145 / OM5) (Oligotropha carboxidovorans).